A 476-amino-acid chain; its full sequence is Sulfate adenylyltransferase subunit 1 (476 aa).

The 216-residue stretch at 24–239 (KSLLRFLTCG…LLETVDVDHE (216 aa)) folds into the tr-type G domain. The G1 stretch occupies residues 33–40 (GSVDDGKS). Residue 33–40 (GSVDDGKS) coordinates GTP. A G2 region spans residues 91-95 (GITID). The tract at residues 112 to 115 (DTPG) is G3. Residues 112 to 116 (DTPGH) and 167 to 170 (NKMD) each bind GTP. Positions 167 to 170 (NKMD) are G4. Residues 205-207 (SAL) are G5.

This sequence belongs to the TRAFAC class translation factor GTPase superfamily. Classic translation factor GTPase family. CysN/NodQ subfamily. Heterodimer composed of CysD, the smaller subunit, and CysN.

It carries out the reaction sulfate + ATP + H(+) = adenosine 5'-phosphosulfate + diphosphate. It participates in sulfur metabolism; hydrogen sulfide biosynthesis; sulfite from sulfate: step 1/3. With CysD forms the ATP sulfurylase (ATPS) that catalyzes the adenylation of sulfate producing adenosine 5'-phosphosulfate (APS) and diphosphate, the first enzymatic step in sulfur assimilation pathway. APS synthesis involves the formation of a high-energy phosphoric-sulfuric acid anhydride bond driven by GTP hydrolysis by CysN coupled to ATP hydrolysis by CysD. This Vibrio campbellii (strain ATCC BAA-1116) protein is Sulfate adenylyltransferase subunit 1.